The primary structure comprises 387 residues: Putative odorant receptor 19b (387 aa).

The Cytoplasmic portion of the chain corresponds to 1–40; sequence MDISKVDSTRALVNHWRIFRIMGIHPPGKRTFWGRHYTAY. A helical membrane pass occupies residues 41–61; sequence SMVWNVTFHICIWVSFSVNLL. Residues 62–71 are Extracellular-facing; sequence QSNSLETFCE. A helical transmembrane segment spans residues 72–92; it reads SLCVTMPHTLYMLKLINVRRM. At 93–127 the chain is on the cytoplasmic side; that stretch reads RGEMISSHWLLRLLDKRLGCADERQIIMAGIERAE. Residues 128–148 traverse the membrane as a helical segment; the sequence is FIFRTIFRGLACTVVLGIIYI. At 149–171 the chain is on the extracellular side; sequence SASSEPTLMYPTWIPWNWKDSTS. A helical membrane pass occupies residues 172–192; the sequence is AYLATAMLHTTALMANATLVL. The Cytoplasmic portion of the chain corresponds to 193 to 254; it reads NLSSYPGTYL…LRLFKSLERS (62 aa). Residues 255–275 form a helical membrane-spanning segment; sequence LSMTCFLQFFSTACAQCTICY. Residues 276 to 285 lie on the Extracellular side of the membrane; sequence FLLFGNVGIM. A helical transmembrane segment spans residues 286-306; that stretch reads RFMNMLFLLVILTTETLLLCY. At 307–336 the chain is on the cytoplasmic side; sequence TAELPCKEGESLLTAVYSCNWLSQSVNFRR. A helical membrane pass occupies residues 337–357; it reads LLLLMLARCQIPMILVSGVIV. The Extracellular portion of the chain corresponds to 358–387; it reads PISMKTFTVMIKGAYTMLTLLNEIRKTSLE.

Belongs to the insect chemoreceptor superfamily. Heteromeric odorant receptor channel (TC 1.A.69) family. Or2a subfamily. Interacts with Orco. Complexes exist early in the endomembrane system in olfactory sensory neurons (OSNs), coupling these complexes to the conserved ciliary trafficking pathway.

The protein resides in the cell membrane. Functionally, odorant receptor which mediates acceptance or avoidance behavior, depending on its substrates. The odorant receptor repertoire encodes a large collection of odor stimuli that vary widely in identity, intensity, and duration. May form a complex with Orco to form odorant-sensing units, providing sensitive and prolonged odorant signaling and calcium permeability. In Drosophila melanogaster (Fruit fly), this protein is Putative odorant receptor 19b.